Here is an 80-residue protein sequence, read N- to C-terminus: Exodeoxyribonuclease 7 small subunit (80 aa).

The protein belongs to the XseB family. Heterooligomer composed of large and small subunits.

Its subcellular location is the cytoplasm. It catalyses the reaction Exonucleolytic cleavage in either 5'- to 3'- or 3'- to 5'-direction to yield nucleoside 5'-phosphates.. Bidirectionally degrades single-stranded DNA into large acid-insoluble oligonucleotides, which are then degraded further into small acid-soluble oligonucleotides. This is Exodeoxyribonuclease 7 small subunit from Aliivibrio salmonicida (strain LFI1238) (Vibrio salmonicida (strain LFI1238)).